Here is a 396-residue protein sequence, read N- to C-terminus: 1-deoxy-D-xylulose 5-phosphate reductoisomerase (396 aa).

NADPH-binding residues include Thr-14, Gly-15, Ser-16, Ile-17, Gly-40, and Asn-128. Lys-129 is a binding site for 1-deoxy-D-xylulose 5-phosphate. Glu-130 is a binding site for NADPH. Asp-154 contacts Mn(2+). The 1-deoxy-D-xylulose 5-phosphate site is built by Ser-155, Glu-156, Ser-180, and His-203. Glu-156 contacts Mn(2+). Residue Gly-209 participates in NADPH binding. 4 residues coordinate 1-deoxy-D-xylulose 5-phosphate: Ser-216, Asn-221, Lys-222, and Glu-225. Residue Glu-225 participates in Mn(2+) binding.

This sequence belongs to the DXR family. The cofactor is Mg(2+). Mn(2+) is required as a cofactor.

It catalyses the reaction 2-C-methyl-D-erythritol 4-phosphate + NADP(+) = 1-deoxy-D-xylulose 5-phosphate + NADPH + H(+). The protein operates within isoprenoid biosynthesis; isopentenyl diphosphate biosynthesis via DXP pathway; isopentenyl diphosphate from 1-deoxy-D-xylulose 5-phosphate: step 1/6. Catalyzes the NADPH-dependent rearrangement and reduction of 1-deoxy-D-xylulose-5-phosphate (DXP) to 2-C-methyl-D-erythritol 4-phosphate (MEP). In Xylella fastidiosa (strain 9a5c), this protein is 1-deoxy-D-xylulose 5-phosphate reductoisomerase.